A 106-amino-acid polypeptide reads, in one-letter code: Aspartyl/glutamyl-tRNA(Asn/Gln) amidotransferase subunit C (106 aa).

The protein belongs to the GatC family. Heterotrimer of A, B and C subunits.

The catalysed reaction is L-glutamyl-tRNA(Gln) + L-glutamine + ATP + H2O = L-glutaminyl-tRNA(Gln) + L-glutamate + ADP + phosphate + H(+). The enzyme catalyses L-aspartyl-tRNA(Asn) + L-glutamine + ATP + H2O = L-asparaginyl-tRNA(Asn) + L-glutamate + ADP + phosphate + 2 H(+). Allows the formation of correctly charged Asn-tRNA(Asn) or Gln-tRNA(Gln) through the transamidation of misacylated Asp-tRNA(Asn) or Glu-tRNA(Gln) in organisms which lack either or both of asparaginyl-tRNA or glutaminyl-tRNA synthetases. The reaction takes place in the presence of glutamine and ATP through an activated phospho-Asp-tRNA(Asn) or phospho-Glu-tRNA(Gln). The protein is Aspartyl/glutamyl-tRNA(Asn/Gln) amidotransferase subunit C of Lactiplantibacillus plantarum (strain ATCC BAA-793 / NCIMB 8826 / WCFS1) (Lactobacillus plantarum).